Reading from the N-terminus, the 198-residue chain is Protein GrpE (198 aa).

Belongs to the GrpE family. In terms of assembly, homodimer.

Its subcellular location is the cytoplasm. Functionally, participates actively in the response to hyperosmotic and heat shock by preventing the aggregation of stress-denatured proteins, in association with DnaK and GrpE. It is the nucleotide exchange factor for DnaK and may function as a thermosensor. Unfolded proteins bind initially to DnaJ; upon interaction with the DnaJ-bound protein, DnaK hydrolyzes its bound ATP, resulting in the formation of a stable complex. GrpE releases ADP from DnaK; ATP binding to DnaK triggers the release of the substrate protein, thus completing the reaction cycle. Several rounds of ATP-dependent interactions between DnaJ, DnaK and GrpE are required for fully efficient folding. The chain is Protein GrpE from Baumannia cicadellinicola subsp. Homalodisca coagulata.